Consider the following 143-residue polypeptide: Large ribosomal subunit protein uL13 (143 aa).

The protein belongs to the universal ribosomal protein uL13 family. In terms of assembly, part of the 50S ribosomal subunit.

Its function is as follows. This protein is one of the early assembly proteins of the 50S ribosomal subunit, although it is not seen to bind rRNA by itself. It is important during the early stages of 50S assembly. This Finegoldia magna (strain ATCC 29328 / DSM 20472 / WAL 2508) (Peptostreptococcus magnus) protein is Large ribosomal subunit protein uL13.